We begin with the raw amino-acid sequence, 378 residues long: Protein RecA (378 aa).

Residue 79 to 86 (GPESSGKT) coordinates ATP.

It belongs to the RecA family.

Its subcellular location is the cytoplasm. In terms of biological role, can catalyze the hydrolysis of ATP in the presence of single-stranded DNA, the ATP-dependent uptake of single-stranded DNA by duplex DNA, and the ATP-dependent hybridization of homologous single-stranded DNAs. It interacts with LexA causing its activation and leading to its autocatalytic cleavage. The sequence is that of Protein RecA from Streptococcus equi subsp. zooepidemicus (strain H70).